The following is a 367-amino-acid chain: UDP-galactopyranose mutase (367 aa).

FAD is bound by residues phenylalanine 12, 31–32 (EK), asparagine 39, and 56–57 (HI). Phenylalanine 12 is a binding site for UDP-alpha-D-galactose. The UDP-alpha-D-galactose site is built by asparagine 80, threonine 152, tryptophan 156, and tyrosine 181. FAD is bound at residue 212–213 (DF). The UDP-alpha-D-galactose site is built by asparagine 268, arginine 278, and tyrosine 311. Residue arginine 340 participates in FAD binding. Tyrosine 346 provides a ligand contact to UDP-alpha-D-galactose. An FAD-binding site is contributed by 347-352 (YDMHQV).

Homodimer. Requires FAD as cofactor.

It carries out the reaction UDP-alpha-D-galactose = UDP-alpha-D-galactofuranose. It participates in bacterial outer membrane biogenesis; lipopolysaccharide biosynthesis. Catalyzes the interconversion through a 2-keto intermediate of uridine diphosphogalactopyranose (UDP-GalP) into uridine diphosphogalactofuranose (UDP-GalF). The protein is UDP-galactopyranose mutase (glf) of Escherichia coli (strain K12).